Reading from the N-terminus, the 648-residue chain is Copper methylamine oxidase (648 aa).

A propeptide spanning residues 1–9 (MTLNAESEA) is cleaved from the precursor. 299–310 (AFDSGEYNIGNM) is a binding site for substrate. Aspartate 301 serves as the catalytic Proton acceptor. Cysteine 320 and cysteine 346 are disulfide-bonded. 382 to 387 (VANYEY) contacts substrate. Tyrosine 385 serves as the catalytic Schiff-base intermediate with substrate; via topaquinone. Position 385 is a 2',4',5'-topaquinone (tyrosine 385). Positions 436 and 438 each coordinate Cu cation. 3 residues coordinate Mn(2+): aspartate 445, phenylalanine 446, and aspartate 584. Histidine 595 contributes to the Cu cation binding site. Residues 629 to 648 (PTSTSTTQTGEADTCCHTDK) form a disordered region.

It belongs to the copper/topaquinone oxidase family. Homodimer. Cu cation serves as cofactor. The cofactor is Zn(2+). Requires L-topaquinone as cofactor. It depends on Mn(2+) as a cofactor. Post-translationally, topaquinone (TPQ) is generated by copper-dependent autoxidation of a specific tyrosyl residue.

The enzyme catalyses a primary methyl amine + O2 + H2O = an aldehyde + H2O2 + NH4(+). This Arthrobacter sp. (strain P1) protein is Copper methylamine oxidase (maoII).